The chain runs to 348 residues: UPF0283 membrane protein PBPRA2435 (348 aa).

The next 3 helical transmembrane spans lie at 71–91 (GLLIAGAAMTGWQTVDYVVSA), 97–117 (WLALGWSVIVAGIATMGITAL), and 211–231 (EAAVMVAMSPLAVADMLLVAW).

Belongs to the UPF0283 family.

The protein resides in the cell inner membrane. The protein is UPF0283 membrane protein PBPRA2435 of Photobacterium profundum (strain SS9).